The following is a 57-amino-acid chain: uncharacterized protein (57 aa).

This is an uncharacterized protein from Thermoproteus tenax virus 1 (strain KRA1) (TTV1).